The following is a 70-amino-acid chain: Plasticin-S1 (70 aa).

An N-terminal signal peptide occupies residues M1–C22. Residues E23–R45 constitute a propeptide that is removed on maturation. Positions E25–R45 are disordered.

Belongs to the frog skin active peptide (FSAP) family. Plasticin subfamily. As to expression, expressed by the skin glands.

The protein localises to the secreted. The native peptide is a cationic amphipathic alpha-helical antimicrobial peptide with potent activity against both Gram-positive and Gram-negative bacteria. It has weak activity against fungi and shows low hemolytic activity. This is Plasticin-S1 from Phyllomedusa sauvagei (Sauvage's leaf frog).